Consider the following 85-residue polypeptide: MAHKKGVGSSRNGRDSNPKMLGVKRFGGERVQPGTIIVRQRGTKIKPGNNVGLGRDYTIYSLIEGVVTFEQHSRNQKRVSVYATE.

Residues 1–26 (MAHKKGVGSSRNGRDSNPKMLGVKRF) form a disordered region.

It belongs to the bacterial ribosomal protein bL27 family.

The chain is Large ribosomal subunit protein bL27 from Roseiflexus sp. (strain RS-1).